We begin with the raw amino-acid sequence, 301 residues long: Protein phosphatase 1 regulatory subunit 3B (301 aa).

A PP1-binding motif motif is present at residues 79-82 (RVSF). The 109-residue stretch at 142–250 (RNRLQAESVC…SNKGLNYRIV (109 aa)) folds into the CBM21 domain.

Interacts with glycogen, PPP1CC catalytic subunit of PP1 and PYGL. Associates with glycogen particles. Forms complexes with debranching enzyme, glycogen phosphorylase, glycogen synthase and phosphorylase kinase which is necessary for its regulation of PP1 activity.

Functionally, acts as a glycogen-targeting subunit for phosphatase PP1. Facilitates interaction of the PP1 with enzymes of the glycogen metabolism and regulates its activity. Suppresses the rate at which PP1 dephosphorylates (inactivates) glycogen phosphorylase and enhances the rate at which it activates glycogen synthase and therefore limits glycogen breakdown. The protein is Protein phosphatase 1 regulatory subunit 3B (ppp1r3b) of Xenopus tropicalis (Western clawed frog).